Here is a 270-residue protein sequence, read N- to C-terminus: Esterase (270 aa).

Active-site charge relay system residues include Ser127, Asp216, and His244.

Belongs to the LovG family.

The protein operates within mycotoxin biosynthesis. Esterase; part of the gene cluster that mediates the biosynthesis of the selective antifungal agent ascochitine, an o-quinone methide that plays a possible protective role against other microbial competitors in nature and is considered to be important for pathogenicity of legume-associated Didymella species. The pathway probably begins with the synthesis of a keto-aldehyde intermediate by the ascochitine non-reducing polyketide synthase pksAC from successive condensations of 4 malonyl-CoA units, presumably with a simple acetyl-CoA starter unit. Release of the keto-aldehyde intermediate is consistent with the presence of the C-terminal reductive release domain. The HR-PKS (orf7) probably makes a diketide starter unit which is passed to the non-reducing polyketide synthase pksAC for further extension, producing ascochital and ascochitine. The aldehyde dehydrogenase (orf1), the 2-oxoglutarate-dependent dioxygenase (orf3) and the dehydrogenase (orf9) are probably involved in subsequent oxidations of methyl groups to the carboxylic acid of the heterocyclic ring. The ascochitine gene cluster also includes a gene encoding a short peptide with a cupin domain (orf2) that is often found in secondary metabolite gene clusters and which function has still to be determined. The polypeptide is Esterase (Didymella fabae (Leaf and pod spot disease fungus)).